The following is a 388-amino-acid chain: Succinate--CoA ligase [ADP-forming] subunit beta (388 aa).

An ATP-grasp domain is found at 9 to 244; sequence KSLFAEYGLP…PSQDDAREAH (236 aa). Residues lysine 46, 53 to 55, glutamate 99, threonine 102, and glutamate 107 contribute to the ATP site; that span reads GRG. Residues asparagine 199 and aspartate 213 each coordinate Mg(2+). Substrate contacts are provided by residues asparagine 264 and 321 to 323; that span reads GIV.

This sequence belongs to the succinate/malate CoA ligase beta subunit family. As to quaternary structure, heterotetramer of two alpha and two beta subunits. Requires Mg(2+) as cofactor.

The catalysed reaction is succinate + ATP + CoA = succinyl-CoA + ADP + phosphate. It carries out the reaction GTP + succinate + CoA = succinyl-CoA + GDP + phosphate. Its pathway is carbohydrate metabolism; tricarboxylic acid cycle; succinate from succinyl-CoA (ligase route): step 1/1. Functionally, succinyl-CoA synthetase functions in the citric acid cycle (TCA), coupling the hydrolysis of succinyl-CoA to the synthesis of either ATP or GTP and thus represents the only step of substrate-level phosphorylation in the TCA. The beta subunit provides nucleotide specificity of the enzyme and binds the substrate succinate, while the binding sites for coenzyme A and phosphate are found in the alpha subunit. The polypeptide is Succinate--CoA ligase [ADP-forming] subunit beta (Shewanella woodyi (strain ATCC 51908 / MS32)).